The sequence spans 219 residues: Small ribosomal subunit protein uS3c (219 aa).

One can recognise a KH type-2 domain in the interval 39-118 (IRSFIRKYIQ…RLNIVITKVE (80 aa)).

Belongs to the universal ribosomal protein uS3 family. In terms of assembly, part of the 30S ribosomal subunit.

The protein localises to the plastid. The chain is Small ribosomal subunit protein uS3c (rps3) from Cuscuta obtusiflora (Peruvian dodder).